The sequence spans 1390 residues: DNA-directed RNA polymerase subunit beta (1390 aa).

Belongs to the RNA polymerase beta chain family. The RNAP catalytic core consists of 2 alpha, 1 beta, 1 beta' and 1 omega subunit. When a sigma factor is associated with the core the holoenzyme is formed, which can initiate transcription.

It catalyses the reaction RNA(n) + a ribonucleoside 5'-triphosphate = RNA(n+1) + diphosphate. DNA-dependent RNA polymerase catalyzes the transcription of DNA into RNA using the four ribonucleoside triphosphates as substrates. This is DNA-directed RNA polymerase subunit beta from Mycoplasma genitalium (strain ATCC 33530 / DSM 19775 / NCTC 10195 / G37) (Mycoplasmoides genitalium).